Consider the following 461-residue polypeptide: Putative aldehyde dehydrogenase FUS7 (461 aa).

NAD(+) is bound at residue 220–225 (GSTTTG). Residues E242 and C276 contribute to the active site.

Belongs to the aldehyde dehydrogenase family.

The catalysed reaction is an aldehyde + NAD(+) + H2O = a carboxylate + NADH + 2 H(+). Its function is as follows. Putative aldehyde dehydrogenase; part of the gene cluster that mediates the biosynthesis of the mycotoxin fusarin C. Within the cluster, FUS1, FUS2, FUS8 and FUS9 are sufficient for fusarin production. The other FUS cluster members are not essential for fusarin C biosynthesis. The chain is Putative aldehyde dehydrogenase FUS7 from Gibberella fujikuroi (strain CBS 195.34 / IMI 58289 / NRRL A-6831) (Bakanae and foot rot disease fungus).